A 103-amino-acid chain; its full sequence is ATP synthase subunit c (103 aa).

3 helical membrane-spanning segments follow: residues 3-23 (FLAL…VSGL), 30-50 (SIAG…IGMG), and 74-94 (MFIA…LALI).

This sequence belongs to the ATPase C chain family. In terms of assembly, F-type ATPases have 2 components, F(1) - the catalytic core - and F(0) - the membrane proton channel. F(1) has five subunits: alpha(3), beta(3), gamma(1), delta(1), epsilon(1). F(0) has three main subunits: a(1), b(2) and c(10-14). The alpha and beta chains form an alternating ring which encloses part of the gamma chain. F(1) is attached to F(0) by a central stalk formed by the gamma and epsilon chains, while a peripheral stalk is formed by the delta and b chains.

The protein resides in the cell inner membrane. F(1)F(0) ATP synthase produces ATP from ADP in the presence of a proton or sodium gradient. F-type ATPases consist of two structural domains, F(1) containing the extramembraneous catalytic core and F(0) containing the membrane proton channel, linked together by a central stalk and a peripheral stalk. During catalysis, ATP synthesis in the catalytic domain of F(1) is coupled via a rotary mechanism of the central stalk subunits to proton translocation. In terms of biological role, key component of the F(0) channel; it plays a direct role in translocation across the membrane. A homomeric c-ring of between 10-14 subunits forms the central stalk rotor element with the F(1) delta and epsilon subunits. The polypeptide is ATP synthase subunit c (Helicobacter hepaticus (strain ATCC 51449 / 3B1)).